The sequence spans 208 residues: Guanylate kinase (208 aa).

A Guanylate kinase-like domain is found at 4–185; sequence GNLYILSAPS…ALADFQAILR (182 aa). ATP is bound at residue 11–18; that stretch reads APSGAGKS.

This sequence belongs to the guanylate kinase family.

Its subcellular location is the cytoplasm. The enzyme catalyses GMP + ATP = GDP + ADP. Its function is as follows. Essential for recycling GMP and indirectly, cGMP. The protein is Guanylate kinase (gmk) of Pasteurella multocida (strain Pm70).